We begin with the raw amino-acid sequence, 318 residues long: NAD kinase (318 aa).

Residue D84 is the Proton acceptor of the active site. Residues 84–85, R89, 159–160, R170, D189, and 200–205 each bind NAD(+); these read DG, NE, and TAYAFS.

It belongs to the NAD kinase family. A divalent metal cation is required as a cofactor.

The protein localises to the cytoplasm. It carries out the reaction NAD(+) + ATP = ADP + NADP(+) + H(+). In terms of biological role, involved in the regulation of the intracellular balance of NAD and NADP, and is a key enzyme in the biosynthesis of NADP. Catalyzes specifically the phosphorylation on 2'-hydroxyl of the adenosine moiety of NAD to yield NADP. This is NAD kinase from Cutibacterium acnes (strain DSM 16379 / KPA171202) (Propionibacterium acnes).